The sequence spans 840 residues: Probable inorganic carbon transporter subunit DabA 2 (840 aa).

Zn(2+) contacts are provided by Cys-356, Asp-358, His-540, and Cys-555.

It belongs to the inorganic carbon transporter (TC 9.A.2) DabA family. In terms of assembly, forms a complex with DabB. Zn(2+) serves as cofactor.

It localises to the cell inner membrane. Functionally, part of an energy-coupled inorganic carbon pump. This Bradyrhizobium sp. (strain ORS 278) protein is Probable inorganic carbon transporter subunit DabA 2.